Here is a 197-residue protein sequence, read N- to C-terminus: ATP synthase subunit delta (197 aa).

The protein belongs to the ATPase delta chain family. As to quaternary structure, F-type ATPases have 2 components, F(1) - the catalytic core - and F(0) - the membrane proton channel. F(1) has five subunits: alpha(3), beta(3), gamma(1), delta(1), epsilon(1). F(0) has three main subunits: a(1), b(2) and c(10-14). The alpha and beta chains form an alternating ring which encloses part of the gamma chain. F(1) is attached to F(0) by a central stalk formed by the gamma and epsilon chains, while a peripheral stalk is formed by the delta and b chains.

The protein resides in the cell inner membrane. In terms of biological role, f(1)F(0) ATP synthase produces ATP from ADP in the presence of a proton or sodium gradient. F-type ATPases consist of two structural domains, F(1) containing the extramembraneous catalytic core and F(0) containing the membrane proton channel, linked together by a central stalk and a peripheral stalk. During catalysis, ATP synthesis in the catalytic domain of F(1) is coupled via a rotary mechanism of the central stalk subunits to proton translocation. Functionally, this protein is part of the stalk that links CF(0) to CF(1). It either transmits conformational changes from CF(0) to CF(1) or is implicated in proton conduction. The protein is ATP synthase subunit delta of Bartonella henselae (strain ATCC 49882 / DSM 28221 / CCUG 30454 / Houston 1) (Rochalimaea henselae).